The primary structure comprises 234 residues: Sperm flagellar protein 1 (234 aa).

The Calponin-homology (CH) domain occupies 7–112 (EEALHQLYLW…VLIPLRQRLE (106 aa)). Residues 181–234 (VLQIAEKEQELLASQETVQVLQMKVKRLEHLLQLKNVRIDDLSRRLQQAERKQR) are essential for homodimerization and microtubule bundling activity.

In terms of assembly, homodimer. Interacts with actin, TJP1, CGN and CDH1. In terms of tissue distribution, expressed predominantly in the seminiferous epithelium of adult testis. Expressed in pillar cells of the organ of Corti (at protein level). Expressed in brain, kidney, lung and testis. Highly expressed in the trachea, lung and oviduct.

It is found in the cytoplasm. Its subcellular location is the cell projection. The protein resides in the cilium. It localises to the flagellum. The protein localises to the cytoskeleton. It is found in the cilium axoneme. Its subcellular location is the apical cell membrane. The protein resides in the basolateral cell membrane. It localises to the stress fiber. The protein localises to the microvillus. It is found in the lamellipodium. Its subcellular location is the filopodium. Microtubule-associated protein that promotes microtubule bundling and stabilizes microtubules against depolymerization in response to cold shock. Microtubule-associated protein involved in the stabilization of microtubules along the axis of migration during radial intercalation. Promotes the establishment and stabilization of an axis of microtubules required for the active migration of cells into the outer epithelium. Essential for ciliary central apparatus formation which requires both its microtubule-binding and bundling activities and for ciliary localization of HYDIN and SPAG6 in ependymal cilia. Binds actin in intestinal epithelial cells (IECs), essential for IECs survival and contributes to formation of filopodia and lamellipodia in migrating IECs. Regulates planar cell polarity signaling pathway and asymmetric microtubule accumulation in ciliated epithelia. The chain is Sperm flagellar protein 1 (Spef1) from Mus musculus (Mouse).